Here is a 162-residue protein sequence, read N- to C-terminus: Large ribosomal subunit protein uL10 (162 aa).

The protein belongs to the universal ribosomal protein uL10 family. Part of the ribosomal stalk of the 50S ribosomal subunit. The N-terminus interacts with L11 and the large rRNA to form the base of the stalk. The C-terminus forms an elongated spine to which L12 dimers bind in a sequential fashion forming a multimeric L10(L12)X complex.

Forms part of the ribosomal stalk, playing a central role in the interaction of the ribosome with GTP-bound translation factors. In Vibrio parahaemolyticus serotype O3:K6 (strain RIMD 2210633), this protein is Large ribosomal subunit protein uL10.